A 655-amino-acid chain; its full sequence is FYVE, RhoGEF and PH domain-containing protein 2 (655 aa).

Ser11 and Ser48 each carry phosphoserine. Residues 18 to 64 are disordered; it reads VFENSRTPEAAPRGQRLEDVHHRPECRPPESPGPREKTNVGEAVGSE. Basic and acidic residues predominate over residues 32–56; that stretch reads QRLEDVHHRPECRPPESPGPREKTN. The 189-residue stretch at 102-290 folds into the DH domain; sequence PEKKIVQELL…FSAAQHSNAA (189 aa). The PH 1 domain occupies 319–418; it reads TLLREGPVLK…WMQAFQAAID (100 aa). An FYVE-type zinc finger spans residues 458-518; it reads DKMVTMCMRC…VCLHCYAFLT (61 aa). Zn(2+)-binding residues include Cys464, Cys467, Cys481, Cys484, Cys489, Cys492, Cys510, and Cys513. The region spanning 544-641 is the PH 2 domain; sequence QSLMCSFLQL…WVKAMERAAS (98 aa). Ser654 is subject to Phosphoserine.

It localises to the cytoplasm. The protein localises to the cytoskeleton. Its subcellular location is the nucleus. It is found in the early endosome. The protein resides in the early endosome membrane. It localises to the cell projection. The protein localises to the ruffle membrane. Activates CDC42, a member of the Ras-like family of Rho- and Rac proteins, by exchanging bound GDP for free GTP. Activates JNK1 via CDC42 but not RAC1. Binds to phosphatidylinositol 4,5-bisphosphate, phosphatidylinositol 3,4,5-trisphosphate, phosphatidylinositol 5-monophosphate, phosphatidylinositol 4-monophosphate and phosphatidylinositol 3-monophosphate. The sequence is that of FYVE, RhoGEF and PH domain-containing protein 2 (FGD2) from Homo sapiens (Human).